Consider the following 284-residue polypeptide: 2,3,4,5-tetrahydropyridine-2,6-dicarboxylate N-succinyltransferase (284 aa).

Belongs to the transferase hexapeptide repeat family.

It localises to the cytoplasm. The enzyme catalyses (S)-2,3,4,5-tetrahydrodipicolinate + succinyl-CoA + H2O = (S)-2-succinylamino-6-oxoheptanedioate + CoA. The protein operates within amino-acid biosynthesis; L-lysine biosynthesis via DAP pathway; LL-2,6-diaminopimelate from (S)-tetrahydrodipicolinate (succinylase route): step 1/3. The sequence is that of 2,3,4,5-tetrahydropyridine-2,6-dicarboxylate N-succinyltransferase from Brucella abortus (strain S19).